The chain runs to 175 residues: Large ribosomal subunit protein uL10 (175 aa).

Belongs to the universal ribosomal protein uL10 family. In terms of assembly, part of the ribosomal stalk of the 50S ribosomal subunit. The N-terminus interacts with L11 and the large rRNA to form the base of the stalk. The C-terminus forms an elongated spine to which L12 dimers bind in a sequential fashion forming a multimeric L10(L12)X complex.

Its function is as follows. Forms part of the ribosomal stalk, playing a central role in the interaction of the ribosome with GTP-bound translation factors. The polypeptide is Large ribosomal subunit protein uL10 (Prochlorococcus marinus (strain SARG / CCMP1375 / SS120)).